The sequence spans 572 residues: Proline--tRNA ligase (572 aa).

The protein belongs to the class-II aminoacyl-tRNA synthetase family. ProS type 1 subfamily. Homodimer.

It localises to the cytoplasm. The catalysed reaction is tRNA(Pro) + L-proline + ATP = L-prolyl-tRNA(Pro) + AMP + diphosphate. Functionally, catalyzes the attachment of proline to tRNA(Pro) in a two-step reaction: proline is first activated by ATP to form Pro-AMP and then transferred to the acceptor end of tRNA(Pro). As ProRS can inadvertently accommodate and process non-cognate amino acids such as alanine and cysteine, to avoid such errors it has two additional distinct editing activities against alanine. One activity is designated as 'pretransfer' editing and involves the tRNA(Pro)-independent hydrolysis of activated Ala-AMP. The other activity is designated 'posttransfer' editing and involves deacylation of mischarged Ala-tRNA(Pro). The misacylated Cys-tRNA(Pro) is not edited by ProRS. The protein is Proline--tRNA ligase of Caldicellulosiruptor bescii (strain ATCC BAA-1888 / DSM 6725 / KCTC 15123 / Z-1320) (Anaerocellum thermophilum).